The chain runs to 1157 residues: MESPLFELNSALSAASSKSEAMLCSISSKGSWPLPEFDPSQIRLIVYQDCERRGRNVLFDSSAKRKIEDVSVSKLCSDAQVRVFGKCCQLKPGGDSSSSLDSSINSSSSFSDAKEQCPKYQGSRCSSDANMLGEMMFGSVAMSYKGSTLKIHQIRSPPQLMLSKVFTARTGSSIYGSLNTLQDSLEFINQDSNTLKPDHSTIMNGLLGNIVHSNPMDMPGREQNEDRDSGIARSASLSSLLITPFPSPGSSFNKSCASSYQRRWRRSQTTSLENGVFPRWSMDESFNLSDDSSGPSPGIVRKKKIAIGVIFSLSRDEDENNKFNEFFFSHFPLFESHMNKLKSAIEQLCLVLLICLMLVFKAMKMSRRSADASQRSLAYNRIVDALNEFRTTICNLYTMPRIGEPVWLTMMSGTPEKNQLCHRFMKEFTFLMENAAKNQFLPALLTAVLTNHLAWVPTVMPNGQPPIRIFLEKHSSQSVDMLAKTHPYNPLWAQLGDLYGAIGSPVRLAKTVVVGKRHDLVQRLLYFLTYFIRCSELQETHLLENGEDEAIVMPGTVITTTLEKGEVEESEYVLVTMHKNRGNLLPKESEEMRTPNCSCKNCKCPISLAQNIEGVSQQEREDAQNTPKVELETSSDESRTIVPDDGQEDAADGHQPRTCQDTKVESVVCTGSSSPEKRVLAESGLEATANMWRNEDVLEAGSQAISATRSPGIAVEKKPPDKLFCDAFPCSAAEAQTKVTFLIGDSMSPDSDIELRSQAVVEQIARHHSPPTAEEGVSADQNCEAKQTVEDQNRDCGTAEPFPQVASEHQSWNPNAYNAEGMSLFDDNFTDDGSVETRTMDDLPGQAAAELLTHNSNLEFSKKLCTKTSKPPSEFCKFMDSVRQETYKNCFAEQDQREKISIRVPHGDRENAEKKVAPGIDWDIPRNESSDSALGDSESEDAGHELTRPSSNYYGGEQEDWAEEYEIPFPGSKLVEVNSVQPSIANFGRSLLGGYCSSYVPDFVLQGIGSDEKLRHCLVSDLSHAVQHPVLDEPIAEAVCIIADTDKWTVQVASSQRRMIDNKLGKEVLVSSLVSNLLHSTLQLYKHNLSPNFCVMHLEDRLQELYFKSKMLSEYLKGQMRVHVKELGVVLGIESSDLPLLAAVASTHSPYVAQILL.

One can recognise a uDENN FNIP1/2-type domain in the interval Phe-37 to Ile-467. Disordered stretches follow at residues Pro-92–Tyr-120, Ser-616–Glu-665, Ser-769–Cys-796, and Val-904–Gly-955. Residues Asp-95–Ser-111 show a composition bias toward low complexity. In terms of domain architecture, cDENN FNIP1/2-type spans Ser-475 to Gln-1083. The span at Ala-651–Val-664 shows a compositional bias: basic and acidic residues. Residues Val-904–Val-916 are compositionally biased toward basic and acidic residues. Positions Phe-1093–His-1148 constitute a dDENN FNIP1/2-type domain.

It belongs to the FNIP family. Homodimer and homomultimer. Heterodimer and heteromultimer with FNIP2. Component of the lysosomal folliculin complex (LFC).

It localises to the lysosome membrane. It is found in the cytoplasm. Its subcellular location is the cytosol. Its function is as follows. Binding partner of the GTPase-activating protein FLCN: involved in the cellular response to amino acid availability by regulating the non-canonical mTORC1 signaling cascade controlling the MiT/TFE factors TFEB and TFE3. Required to promote FLCN recruitment to lysosomes and interaction with Rag GTPases, leading to activation of the non-canonical mTORC1 signaling. In low-amino acid conditions, component of the lysosomal folliculin complex (LFC) on the membrane of lysosomes, which inhibits the GTPase-activating activity of FLCN, thereby inactivating mTORC1 and promoting nuclear translocation of TFEB and TFE3. Upon amino acid restimulation, disassembly of the LFC complex liberates the GTPase-activating activity of FLCN, leading to activation of mTORC1 and subsequent inactivation of TFEB and TFE3. In addition to its role in mTORC1 signaling, also acts as a co-chaperone of HSP90AA1/Hsp90: inhibits the ATPase activity of HSP90AA1/Hsp90, leading to activate both kinase and non-kinase client proteins of HSP90AA1/Hsp90. Acts as a scaffold to load client protein FLCN onto HSP90AA1/Hsp90. The polypeptide is Folliculin-interacting protein 1 (Gallus gallus (Chicken)).